A 443-amino-acid polypeptide reads, in one-letter code: Putative rhamnogalacturonase D (443 aa).

The N-terminal stretch at 1–16 (MLVTSLIALLPAIAAA) is a signal peptide. An intrachain disulfide couples Cys-37 to Cys-63. 4 N-linked (GlcNAc...) asparagine glycosylation sites follow: Asn-47, Asn-103, Asn-124, and Asn-152. Asp-215 functions as the Proton donor in the catalytic mechanism. A disulfide bond links Cys-217 and Cys-234. N-linked (GlcNAc...) asparagine glycosylation is found at Asn-235, Asn-250, Asn-263, Asn-276, and Asn-281. Residues Cys-338 and Cys-344 are joined by a disulfide bond. The N-linked (GlcNAc...) asparagine glycan is linked to Asn-346. Cys-366 and Cys-375 are joined by a disulfide. An N-linked (GlcNAc...) asparagine glycan is attached at Asn-380.

It belongs to the glycosyl hydrolase 28 family.

It localises to the secreted. Its function is as follows. Pectinolytic enzymes consist of four classes of enzymes: pectine lyase, polygalacturonase, pectin methylesterase and rhamnogalacturonase. Hydrolyzes alpha-D-galacturonopyranosyl-(1,2)-alpha-L-rhamnopyranosyl linkages in the backbone of the hairy regions of pectins. The polypeptide is Putative rhamnogalacturonase D (rhgD) (Aspergillus niger (strain ATCC MYA-4892 / CBS 513.88 / FGSC A1513)).